A 200-amino-acid polypeptide reads, in one-letter code: Integrin beta-1-binding protein 1 (200 aa).

The segment covering 1-10 (MFRKGKKRHS) has biased composition (basic residues). The tract at residues 1–55 (MFRKGKKRHSSSSSQSSEISTKSKSVDSSLGGLSRSSTVASLDTDSTKSSGQSNS) is disordered. Residues 6–7 (KK) carry the Nuclear localization signal motif. Residues 11–29 (SSSSQSSEISTKSKSVDSS) show a composition bias toward low complexity. Polar residues predominate over residues 34-55 (SRSSTVASLDTDSTKSSGQSNS). Residue threonine 38 is modified to Phosphothreonine; by CaMK2. A Phosphoserine modification is found at serine 41. A PID domain is found at 58–200 (DTCAEFRIKY…FDSVLTSDKS (143 aa)). The interval 136-139 (YLII) is interaction with KRIT1. The tract at residues 139-141 (IRM) is interaction with ITGB1.

In terms of assembly, found in a complex, at least composed of ITGB1BP1, KRIT1 and RAP1A. Interacts (via C-terminal region) with ITGB1 (via C-terminal cytoplasmic tail); the interaction prevents talin TLN1 binding to ITGB1 and KRIT1 and ITGB1 compete for the same binding site. Interacts with KRIT1 (via N-terminal NPXY motif); the interaction induces the opening conformation of KRIT1 and KRIT1 and ITGB1 compete for the same binding site. Isoform 2 does not interact with ITGB1. Interacts with CDC42 (GTP- or GDP-bound form); the interaction is increased with the CDC42-membrane bound forms and prevents both CDC42 activation and cell spreading. Interacts (via C-terminal domain region) with NME2. Interacts with FERMT2 and RAC1. Interacts (via N-terminus and PTB domain) with ROCK1. In terms of processing, phosphorylation at Thr-38 seems to enhance integrin alpha5beta1-mediated cell adhesion. The degree of phosphorylation is regulated by integrin-dependent cell-matrix interaction. In terms of tissue distribution, expressed in the brain.

Its subcellular location is the nucleus. It localises to the cytoplasm. It is found in the cytoskeleton. The protein localises to the cell membrane. The protein resides in the cell projection. Its subcellular location is the lamellipodium. It localises to the ruffle. In terms of biological role, key regulator of the integrin-mediated cell-matrix interaction signaling by binding to the ITGB1 cytoplasmic tail and preventing the activation of integrin alpha-5/beta-1 (heterodimer of ITGA5 and ITGB1) by talin or FERMT1. Plays a role in cell proliferation, differentiation, spreading, adhesion and migration in the context of mineralization and bone development and angiogenesis. Stimulates cellular proliferation in a fibronectin-dependent manner. Involved in the regulation of beta-1 integrin-containing focal adhesion (FA) site dynamics by controlling its assembly rate during cell adhesion; inhibits beta-1 integrin clustering within FA by directly competing with talin TLN1, and hence stimulates osteoblast spreading and migration in a fibronectin- and/or collagen-dependent manner. Acts as a guanine nucleotide dissociation inhibitor (GDI) by regulating Rho family GTPases during integrin-mediated cell matrix adhesion; reduces the level of active GTP-bound form of both CDC42 and RAC1 GTPases upon cell adhesion to fibronectin. Stimulates the release of active CDC42 from the membranes to maintain it in an inactive cytoplasmic pool. Participates in the translocation of the Rho-associated protein kinase ROCK1 to membrane ruffles at cell leading edges of the cell membrane, leading to an increase of myoblast cell migration on laminin. Plays a role in bone mineralization at a late stage of osteoblast differentiation; modulates the dynamic formation of focal adhesions into fibrillar adhesions, which are adhesive structures responsible for fibronectin deposition and fibrillogenesis. Plays a role in blood vessel development; acts as a negative regulator of angiogenesis by attenuating endothelial cell proliferation and migration, lumen formation and sprouting angiogenesis by promoting AKT phosphorylation and inhibiting ERK1/2 phosphorylation through activation of the Notch signaling pathway. Promotes transcriptional activity of the MYC promoter. This chain is Integrin beta-1-binding protein 1 (Itgb1bp1), found in Mus musculus (Mouse).